The following is a 444-amino-acid chain: Aflatoxin biosynthesis regulatory protein (444 aa).

The tract at residues 1–25 (MVDHISPRASPGPIRSSQTRRARKL) is disordered. The zn(2)-C6 fungal-type DNA-binding region spans 29–56 (CTSCASSKVRCTKEKPACARCIERGLAC). The interval 64 to 174 (MGRNPRAPSP…AGQEQSTLSS (111 aa)) is disordered. Basic residues predominate over residues 106 to 116 (TQAHTHAHSHP). Low complexity predominate over residues 120–130 (PQSHPQSNQPP). Over residues 136–149 (PNGSSSVSAIFSHQ) the composition is skewed to polar residues.

As to quaternary structure, interacts with aflS.

The protein localises to the nucleus. Transcription factor; part of the gene cluster that mediates the biosynthesis of aflatoxin, a polyketide-derived furanocoumarin which is part of the most toxic and carcinogenic compounds among the known mycotoxins. Binds to at least 17 genes in the aflatoxin biosynthetic cluster, leading to the activation of an enzymatic cascade reaction that results in aflatoxin biosynthesis. Promoter regions of several biosynthesis genes are bound by aflR in a dimeric form with a 5'-TCG(N5)CGA-3' binding motif. AflR also recognizes 5'-TTAGGCCTAA-3' and 5'-TCGCAGCCCGG-3' binding sequences. AflR achieves its binding specificity through a mechanism in which either two copies of aflR or its complex with aflS bind to target sites on DNA in a highly cooperative manner. AflS acts as a modulator of aflR's DNA-binding by decreasing its DNA-binding affinity. In addition to aflatoxin biosynthesis, also plays a positive role in the fungal growth, spore germination, sclerotial development, and carbohydrate metabolism. This chain is Aflatoxin biosynthesis regulatory protein, found in Aspergillus flavus (strain ATCC 200026 / FGSC A1120 / IAM 13836 / NRRL 3357 / JCM 12722 / SRRC 167).